Here is a 379-residue protein sequence, read N- to C-terminus: Protein-glutamate methylesterase/protein-glutamine glutaminase (379 aa).

The region spanning 4-121 (KILVVDDSIF…AANRQDAVAL (118 aa)) is the Response regulatory domain. A 4-aspartylphosphate modification is found at D55. One can recognise a CheB-type methylesterase domain in the interval 186 to 379 (SGKKYRCLAI…FESHILKEMA (194 aa)). Catalysis depends on residues S198, H225, and D323.

Belongs to the CheB family. Phosphorylated by CheA. Phosphorylation of the N-terminal regulatory domain activates the methylesterase activity.

Its subcellular location is the cytoplasm. It carries out the reaction [protein]-L-glutamate 5-O-methyl ester + H2O = L-glutamyl-[protein] + methanol + H(+). The catalysed reaction is L-glutaminyl-[protein] + H2O = L-glutamyl-[protein] + NH4(+). Its function is as follows. Involved in chemotaxis. Part of a chemotaxis signal transduction system that modulates chemotaxis in response to various stimuli. Catalyzes the demethylation of specific methylglutamate residues introduced into the chemoreceptors (methyl-accepting chemotaxis proteins or MCP) by CheR. Also mediates the irreversible deamidation of specific glutamine residues to glutamic acid. The protein is Protein-glutamate methylesterase/protein-glutamine glutaminase of Pseudoalteromonas atlantica (strain T6c / ATCC BAA-1087).